The sequence spans 226 residues: LysM and putative peptidoglycan-binding domain-containing protein 1 (226 aa).

Serine 23 and serine 33 each carry phosphoserine. Residues 40–84 (LEHQLEPGDTLAGLALKYGVTMEQIKRTNRLYTNDSIFLKKTLYI) enclose the LysM domain. The segment at 95–156 (NGLDSEEEND…PSHDLSASDF (62 aa)) is disordered. A compositionally biased stretch (acidic residues) spans 98–107 (DSEEENDGEE). Serine 99 bears the Phosphoserine mark. The span at 142-151 (QETSTPSHDL) shows a compositional bias: polar residues. Phosphoserine occurs at positions 165, 180, 193, and 211. The interval 170–226 (AAAQKLRKGESGVPEEDTGLYPSSPRMQQRAVLGPVPLTRTSRTQTLRDQEDEIFKL) is disordered. Positions 215–226 (TLRDQEDEIFKL) are enriched in basic and acidic residues.

This Mus musculus (Mouse) protein is LysM and putative peptidoglycan-binding domain-containing protein 1 (Lysmd1).